The chain runs to 365 residues: UDP-N-acetylglucosamine--N-acetylmuramyl-(pentapeptide) pyrophosphoryl-undecaprenol N-acetylglucosamine transferase (365 aa).

UDP-N-acetyl-alpha-D-glucosamine is bound by residues 13-15, N125, R165, S192, and Q293; that span reads TGG.

Belongs to the glycosyltransferase 28 family. MurG subfamily.

The protein resides in the cell inner membrane. The catalysed reaction is di-trans,octa-cis-undecaprenyl diphospho-N-acetyl-alpha-D-muramoyl-L-alanyl-D-glutamyl-meso-2,6-diaminopimeloyl-D-alanyl-D-alanine + UDP-N-acetyl-alpha-D-glucosamine = di-trans,octa-cis-undecaprenyl diphospho-[N-acetyl-alpha-D-glucosaminyl-(1-&gt;4)]-N-acetyl-alpha-D-muramoyl-L-alanyl-D-glutamyl-meso-2,6-diaminopimeloyl-D-alanyl-D-alanine + UDP + H(+). It functions in the pathway cell wall biogenesis; peptidoglycan biosynthesis. Cell wall formation. Catalyzes the transfer of a GlcNAc subunit on undecaprenyl-pyrophosphoryl-MurNAc-pentapeptide (lipid intermediate I) to form undecaprenyl-pyrophosphoryl-MurNAc-(pentapeptide)GlcNAc (lipid intermediate II). The chain is UDP-N-acetylglucosamine--N-acetylmuramyl-(pentapeptide) pyrophosphoryl-undecaprenol N-acetylglucosamine transferase from Ruegeria pomeroyi (strain ATCC 700808 / DSM 15171 / DSS-3) (Silicibacter pomeroyi).